The following is a 2254-amino-acid chain: Voltage-dependent T-type calcium channel subunit alpha-1G (2254 aa).

The interval 1–48 (MDEEEDGAGAEESGQPRSFTQLNDLSGAGGRQGPGSTEKDPGSADSEA) is disordered. At 1-80 (MDEEEDGAGA…RSWCLRTVCN (80 aa)) the chain is on the cytoplasmic side. Residues 15–24 (QPRSFTQLND) are compositionally biased toward polar residues. An I repeat occupies 68 to 398 (SRPRSWCLRT…LCLVVIATQF (331 aa)). The helical transmembrane segment at 81–101 (PWFERVSMLVILLNCVTLGMF) threads the bilayer. At 102-119 (RPCEDIACDSQRCRILQA) the chain is on the extracellular side. The helical transmembrane segment at 120 to 141 (FDDFIFAFFAVEMVVKMVALGI) threads the bilayer. The Cytoplasmic segment spans residues 142-150 (FGKKCYLGD). The helical transmembrane segment at 151–170 (TWNRLDFFIVIAGMLEYSLD) threads the bilayer. Topologically, residues 171–175 (LQNVS) are extracellular. A glycan (N-linked (GlcNAc...) asparagine) is linked at Asn173. The helical transmembrane segment at 176–193 (FSAVRTVRVLRPLRAINR) threads the bilayer. Residues 194-213 (VPSMRILVTLLLDTLPMLGN) are Cytoplasmic-facing. Residues 214-234 (VLLLCFFVFFIFGIVGVQLWA) traverse the membrane as a helical segment. Residues 235–370 (GLLRNRCFLP…YFVMDAHSFY (136 aa)) are Extracellular-facing. 4 N-linked (GlcNAc...) asparagine glycosylation sites follow: Asn246, Asn306, Asn310, and Asn322. A helical transmembrane segment spans residues 371-395 (NFIYFILLIIVGSFFMINLCLVVIA). Residues 396-744 (TQFSETKQRE…DTFRKIVDSK (349 aa)) lie on the Cytoplasmic side of the membrane. Ser467 bears the Phosphoserine mark. Residues 494–506 (LVHHHHHHHHHYH) are compositionally biased toward basic residues. 4 disordered regions span residues 494-513 (LVHH…GTLR), 525-553 (DANG…AESV), 579-598 (ASGR…TSPP), and 699-721 (DAQH…GPDA). The span at 534 to 545 (LPPPSTPTPSGG) shows a compositional bias: pro residues. Ser716 is subject to Phosphoserine. An II repeat occupies 730–968 (WRLICDTFRK…LLVAILVEGF (239 aa)). Residues 745–765 (YFGRGIMIAILVNTLSMGIEY) traverse the membrane as a helical segment. Topologically, residues 766–778 (HEQPEELTNALEI) are extracellular. A helical transmembrane segment spans residues 779 to 800 (SNIVFTSLFALEMLLKLLVYGP). Over 801–806 (FGYIKN) the chain is Cytoplasmic. The helical transmembrane segment at 807–825 (PYNIFDGVIVVISVWEIVG) threads the bilayer. Topologically, residues 826 to 833 (QQGGGLSV) are extracellular. A helical membrane pass occupies residues 834–857 (LRTFRLMRVLKLVRFLPALQRQLV). Residues 858-868 (VLMKTMDNVAT) are Cytoplasmic-facing. The chain crosses the membrane as a helical span at residues 869–889 (FCMLLMLFIFIFSILGMHLFG). The Extracellular segment spans residues 890 to 940 (CKFASERDGDTLPDRKNFDSLLWAIVTVFQILTQEDWNKVLYNGMASTSSW). Residues 941 to 965 (AALYFIALMTFGNYVLFNLLVAILV) form a helical membrane-spanning segment. Residues 966 to 1251 (EGFQAEGDAT…SRFRLLCHRI (286 aa)) are Cytoplasmic-facing. Positions 1024 to 1209 (TPMSHPKSSS…GDDDNDEGNL (186 aa)) are disordered. Low complexity-rich tracts occupy residues 1041-1052 (GSGSRRTSSSGS) and 1065-1091 (PPSA…SRNS). Composition is skewed to acidic residues over residues 1117 to 1126 (ESQDEEESSE) and 1196 to 1206 (PQLDGDDDNDE). Phosphoserine is present on residues Ser1118, Ser1124, and Ser1125. Residues 1242–1519 (SRFRLLCHRI…MFVGVVVENF (278 aa)) form an III repeat. Residues 1252–1274 (ITHKMFDHVVLVIIFLNCITIAM) form a helical membrane-spanning segment. Residues 1275–1292 (ERPKIDPHSAERIFLTLS) lie on the Extracellular side of the membrane. Residues 1293-1313 (NYIFTAVFLAEMTVKVVALGW) form a helical membrane-spanning segment. The Cytoplasmic portion of the chain corresponds to 1314–1323 (CFGEQAYLRS). The chain crosses the membrane as a helical span at residues 1324-1343 (SWNVLDGLLVLISVIDILVS). Topologically, residues 1344 to 1357 (MVSDSGTKILGMLR) are extracellular. A helical membrane pass occupies residues 1358–1379 (VLRLLRTLRPLRVISRAQGLKL). At 1380-1389 (VVETLMSSLK) the chain is on the cytoplasmic side. The chain crosses the membrane as a helical span at residues 1390–1413 (PIGNIVVICCAFFIIFGILGVQLF). The Extracellular segment spans residues 1414–1490 (KGKFFVCQGE…DQQPIMNHNP (77 aa)). N-linked (GlcNAc...) asparagine glycans are attached at residues Asn1427 and Asn1430. The helical transmembrane segment at 1491-1516 (WMLLYFISFLLIVAFFVLNMFVGVVV) threads the bilayer. Residues 1517–1578 (ENFHKCRQHQ…RLLVHHLCTS (62 aa)) lie on the Cytoplasmic side of the membrane. An IV repeat occupies 1564 to 1822 (DYSRFRLLVH…VVIAVLMKHL (259 aa)). The chain crosses the membrane as a helical span at residues 1579-1599 (HYLDLFITGVIGLNVVTMAME). Topologically, residues 1600 to 1613 (HYQQPQILDEALKI) are extracellular. A helical membrane pass occupies residues 1614-1635 (CNYIFTVIFVFESVFKLVAFGF). Residues 1636–1642 (RRFFQDR) are Cytoplasmic-facing. The helical transmembrane segment at 1643–1661 (WNQLDLAIVLLSIMGITLE) threads the bilayer. At 1662–1675 (EIEVNLSLPINPTI) the chain is on the extracellular side. Asn1666 carries an N-linked (GlcNAc...) asparagine glycan. A helical transmembrane segment spans residues 1676-1699 (IRIMRVLRIARVLKLLKMAVGMRA). Topologically, residues 1700 to 1713 (LLHTVMQALPQVGN) are cytoplasmic. A helical transmembrane segment spans residues 1714–1734 (LGLLFMLLFFIFAALGVELFG). Residues 1735 to 1794 (DLECDETHPCEGLGRHATFRNFGMAFLTLFRVSTGDNWNGIMKDTLRDCDQESTCYNTVI) lie on the Extracellular side of the membrane. Residues 1795-1822 (SPIYFVSFVLTAQFVLVNVVIAVLMKHL) traverse the membrane as a helical segment. At 1823–2254 (EESNKEAKEE…LSSDPTDMDP (432 aa)) the chain is on the cytoplasmic side. Residues 2153 to 2254 (DSGSQPRLCP…LSSDPTDMDP (102 aa)) form a disordered region. Residues 2184–2193 (SPPSISIDPP) show a composition bias toward low complexity. 2 stretches are compositionally biased toward polar residues: residues 2220–2232 (PSVS…TAAS) and 2240–2254 (LSLS…DMDP).

It belongs to the calcium channel alpha-1 subunit (TC 1.A.1.11) family. CACNA1G subfamily. In terms of processing, in response to raising of intracellular calcium, the T-type channels are activated by CaM-kinase II. As to expression, highly expressed in brain. Moderate expression in heart; low expression in placenta, kidney and lung.

The protein resides in the cell membrane. It localises to the cytoplasm. The catalysed reaction is Ca(2+)(in) = Ca(2+)(out). Functionally, voltage-sensitive calcium channels (VSCC) mediate the entry of calcium ions into excitable cells and are also involved in a variety of calcium-dependent processes, including muscle contraction, hormone or neurotransmitter release, gene expression, cell motility, cell division and cell death. The isoform alpha-1G gives rise to T-type calcium currents. T-type calcium channels belong to the 'low-voltage activated (LVA)' group and are strongly blocked by nickel and mibefradil. A particularity of this type of channels is an opening at quite negative potentials and a voltage-dependent inactivation. T-type channels serve pacemaking functions in both central neurons and cardiac nodal cells and support calcium signaling in secretory cells and vascular smooth muscle. They may also be involved in the modulation of firing patterns of neurons which is important for information processing as well as in cell growth processes. This chain is Voltage-dependent T-type calcium channel subunit alpha-1G (Cacna1g), found in Rattus norvegicus (Rat).